The sequence spans 80 residues: MAKTFSSICFTTLLLVVLFISTEIPKSEAHCDHFLGEAPVYPCKEKACKSVCKEHYHHACKGECEYHGREVHCHCYGDYH.

Residues 1 to 29 (MAKTFSSICFTTLLLVVLFISTEIPKSEA) form the signal peptide. 3 disulfides stabilise this stretch: C43-C64, C48-C73, and C52-C75.

It belongs to the DEFL family.

The protein localises to the secreted. This Arabidopsis thaliana (Mouse-ear cress) protein is Defensin-like protein 204.